The primary structure comprises 184 residues: Peptide deformylase (184 aa).

The Fe cation site is built by C111 and H154. The active site involves E155. H158 serves as a coordination point for Fe cation.

Belongs to the polypeptide deformylase family. It depends on Fe(2+) as a cofactor.

The enzyme catalyses N-terminal N-formyl-L-methionyl-[peptide] + H2O = N-terminal L-methionyl-[peptide] + formate. In terms of biological role, removes the formyl group from the N-terminal Met of newly synthesized proteins. Requires at least a dipeptide for an efficient rate of reaction. N-terminal L-methionine is a prerequisite for activity but the enzyme has broad specificity at other positions. The chain is Peptide deformylase from Lactobacillus delbrueckii subsp. bulgaricus (strain ATCC 11842 / DSM 20081 / BCRC 10696 / JCM 1002 / NBRC 13953 / NCIMB 11778 / NCTC 12712 / WDCM 00102 / Lb 14).